A 430-amino-acid polypeptide reads, in one-letter code: Putative cytochrome P450 139 (430 aa).

Residue Cys372 participates in heme binding.

The protein belongs to the cytochrome P450 family. It depends on heme as a cofactor.

In Mycobacterium bovis (strain ATCC BAA-935 / AF2122/97), this protein is Putative cytochrome P450 139 (cyp139).